The following is a 111-amino-acid chain: FK506-binding protein 1 (111 aa).

The disordered stretch occupies residues 1-20; it reads MGVEKTIITQGSGPSPQVGQ. Residues 7–20 are compositionally biased toward polar residues; sequence IITQGSGPSPQVGQ. Positions 19 to 111 constitute a PPIase FKBP-type domain; the sequence is GQKVTMEYTG…IFDVELKKIG (93 aa).

The protein belongs to the FKBP-type PPIase family. FKBP1 subfamily.

It is found in the cytoplasm. The enzyme catalyses [protein]-peptidylproline (omega=180) = [protein]-peptidylproline (omega=0). Its activity is regulated as follows. Inhibited by both FK506 and rapamycin. In terms of biological role, PPIases accelerate the folding of proteins. It catalyzes the cis-trans isomerization of proline imidic peptide bonds in oligopeptides. This is FK506-binding protein 1 (FPR1) from Gibberella zeae (strain ATCC MYA-4620 / CBS 123657 / FGSC 9075 / NRRL 31084 / PH-1) (Wheat head blight fungus).